A 349-amino-acid polypeptide reads, in one-letter code: D-alanine--D-alanine ligase (349 aa).

Residues 140 to 345 (NILFEAMGIP…MKDVFTWLLE (206 aa)) enclose the ATP-grasp domain. 169-224 (NLSFSYPVFIKPTLGGSSVNTGMAKTAEEAMTLVDKIFVTDDRVLVQKLVSGTEVS) contributes to the ATP binding site. Positions 300, 312, and 314 each coordinate Mg(2+).

This sequence belongs to the D-alanine--D-alanine ligase family. The cofactor is Mg(2+). Mn(2+) serves as cofactor.

The protein resides in the cytoplasm. It catalyses the reaction 2 D-alanine + ATP = D-alanyl-D-alanine + ADP + phosphate + H(+). It functions in the pathway cell wall biogenesis; peptidoglycan biosynthesis. In terms of biological role, cell wall formation. This chain is D-alanine--D-alanine ligase, found in Leptospira biflexa serovar Patoc (strain Patoc 1 / Ames).